A 508-amino-acid polypeptide reads, in one-letter code: Small ribosomal subunit protein mS47 (508 aa).

This sequence belongs to the enoyl-CoA hydratase/isomerase family. Mitochondrion-specific ribosomal protein mS47 subfamily. As to quaternary structure, component of the mitochondrial small ribosomal subunit (mt-SSU). Mature N.crassa 74S mitochondrial ribosomes consist of a small (37S) and a large (54S) subunit. The 37S small subunit contains a 16S ribosomal RNA (16S mt-rRNA) and 32 different proteins. The 54S large subunit contains a 23S rRNA (23S mt-rRNA) and 42 different proteins. mS47 forms a protuberance of the N.crassa mitoribosome and retains a solvent-exposed cavity liekly capable of accommodating a substrate, in accordance with it being an active enzyme as well as an integral constituent of the mitoribosome.

It localises to the mitochondrion. The enzyme catalyses 3-hydroxy-2-methylpropanoyl-CoA + H2O = 3-hydroxy-2-methylpropanoate + CoA + H(+). Its function is as follows. Component of the mitochondrial ribosome (mitoribosome), a dedicated translation machinery responsible for the synthesis of mitochondrial genome-encoded proteins, including at least some of the essential transmembrane subunits of the mitochondrial respiratory chain. The mitoribosomes are attached to the mitochondrial inner membrane and translation products are cotranslationally integrated into the membrane. mS47 has enzymatic activity in vitro, and is able to catalyze the specific hydrolysis of 3-hydroxyisobutyryl-CoA (HIBYL-CoA). However, because the turnover rate of mS47 is only a fraction of that of the homologous mammalian enzyme, the physiological function of this activity remains unclear. This is Small ribosomal subunit protein mS47 (ehd3) from Neurospora crassa (strain ATCC 24698 / 74-OR23-1A / CBS 708.71 / DSM 1257 / FGSC 987).